We begin with the raw amino-acid sequence, 590 residues long: Membrane protein insertase YidC (590 aa).

A run of 5 helical transmembrane segments spans residues 5–25 (SVIG…FMKP), 368–388 (GLII…LSLA), 433–453 (LGGC…FYVF), 483–503 (LPLY…TVFF), and 519–539 (IMMW…PAGL).

This sequence belongs to the OXA1/ALB3/YidC family. Type 1 subfamily. In terms of assembly, interacts with the Sec translocase complex via SecD. Specifically interacts with transmembrane segments of nascent integral membrane proteins during membrane integration.

It is found in the cell inner membrane. Required for the insertion and/or proper folding and/or complex formation of integral membrane proteins into the membrane. Involved in integration of membrane proteins that insert both dependently and independently of the Sec translocase complex, as well as at least some lipoproteins. Aids folding of multispanning membrane proteins. The protein is Membrane protein insertase YidC of Chlorobaculum tepidum (strain ATCC 49652 / DSM 12025 / NBRC 103806 / TLS) (Chlorobium tepidum).